The chain runs to 240 residues: Sugar fermentation stimulation protein homolog (240 aa).

The protein belongs to the SfsA family.

In Methanothermobacter thermautotrophicus (strain ATCC 29096 / DSM 1053 / JCM 10044 / NBRC 100330 / Delta H) (Methanobacterium thermoautotrophicum), this protein is Sugar fermentation stimulation protein homolog.